The primary structure comprises 116 residues: Histone H2B (116 aa).

Residues 1-11 (TSGKAAKKAGK) are compositionally biased toward basic residues. The tract at residues 1–25 (TSGKAAKKAGKAQKSITKGDKKKRK) is disordered. Lys4, Lys11, and Lys14 each carry N6-acetyllysine. A glycan (O-linked (GlcNAc) serine) is linked at Ser103. Residue Lys111 forms a Glycyl lysine isopeptide (Lys-Gly) (interchain with G-Cter in ubiquitin) linkage.

In terms of assembly, the nucleosome is a histone octamer containing two molecules each of H2A, H2B, H3 and H4 assembled in one H3-H4 heterotetramer and two H2A-H2B heterodimers. The octamer wraps approximately 147 bp of DNA. Monoubiquitination gives a specific tag for epigenetic transcriptional activation and is also prerequisite for histone H3 'Lys-4' and 'Lys-79' methylation. In terms of processing, glcNAcylation at Ser-103 promotes monoubiquitination of Lys-111. It fluctuates in response to extracellular glucose, and associates with transcribed genes.

It localises to the nucleus. The protein resides in the chromosome. In terms of biological role, core component of nucleosome. Nucleosomes wrap and compact DNA into chromatin, limiting DNA accessibility to the cellular machineries which require DNA as a template. Histones thereby play a central role in transcription regulation, DNA repair, DNA replication and chromosomal stability. DNA accessibility is regulated via a complex set of post-translational modifications of histones, also called histone code, and nucleosome remodeling. Functionally, a mixture of histones H2B and H4 has antimicrobial activity against the Gram-positive bacterium M.luteus. This Penaeus vannamei (Whiteleg shrimp) protein is Histone H2B.